The sequence spans 447 residues: Phosphoglucosamine mutase (447 aa).

The active-site Phosphoserine intermediate is the Ser106. 4 residues coordinate Mg(2+): Ser106, Asp245, Asp247, and Asp249. Ser106 is subject to Phosphoserine.

It belongs to the phosphohexose mutase family. Mg(2+) is required as a cofactor. Activated by phosphorylation.

It catalyses the reaction alpha-D-glucosamine 1-phosphate = D-glucosamine 6-phosphate. In terms of biological role, catalyzes the conversion of glucosamine-6-phosphate to glucosamine-1-phosphate. The chain is Phosphoglucosamine mutase from Cupriavidus metallidurans (strain ATCC 43123 / DSM 2839 / NBRC 102507 / CH34) (Ralstonia metallidurans).